The following is a 317-amino-acid chain: Ribonuclease Z (317 aa).

Zn(2+)-binding residues include His-62, His-64, Asp-66, His-67, His-139, Asp-210, and His-268. Asp-66 functions as the Proton acceptor in the catalytic mechanism.

Belongs to the RNase Z family. In terms of assembly, homodimer. Zn(2+) serves as cofactor.

It carries out the reaction Endonucleolytic cleavage of RNA, removing extra 3' nucleotides from tRNA precursor, generating 3' termini of tRNAs. A 3'-hydroxy group is left at the tRNA terminus and a 5'-phosphoryl group is left at the trailer molecule.. Functionally, zinc phosphodiesterase, which displays some tRNA 3'-processing endonuclease activity. Probably involved in tRNA maturation, by removing a 3'-trailer from precursor tRNA. The sequence is that of Ribonuclease Z from Picosynechococcus sp. (strain ATCC 27264 / PCC 7002 / PR-6) (Agmenellum quadruplicatum).